The chain runs to 396 residues: Elongation factor Tu (396 aa).

A tr-type G domain is found at lysine 11–lysine 205. The G1 stretch occupies residues glycine 20 to threonine 27. Glycine 20–threonine 27 is a GTP binding site. A Mg(2+)-binding site is contributed by threonine 27. Residues glycine 61–asparagine 65 are G2. The segment at aspartate 82–glycine 85 is G3. GTP contacts are provided by residues aspartate 82–histidine 86 and asparagine 137–aspartate 140. Positions asparagine 137–aspartate 140 are G4. The segment at serine 175–leucine 177 is G5.

This sequence belongs to the TRAFAC class translation factor GTPase superfamily. Classic translation factor GTPase family. EF-Tu/EF-1A subfamily. Monomer.

It is found in the cytoplasm. The enzyme catalyses GTP + H2O = GDP + phosphate + H(+). Its function is as follows. GTP hydrolase that promotes the GTP-dependent binding of aminoacyl-tRNA to the A-site of ribosomes during protein biosynthesis. The sequence is that of Elongation factor Tu from Limosilactobacillus reuteri (strain DSM 20016) (Lactobacillus reuteri).